The following is a 463-amino-acid chain: Ammonium transporter 1 (463 aa).

At 1–39 (MVAGEIIKGVAAEITNGSSSSVVQKYLDCANQVAPDPGN) the chain is on the extracellular side. A helical membrane pass occupies residues 40–60 (TTWVLLSTILVLGMMPALAFF). Topologically, residues 61 to 76 (EAGLLRSKNTLSIITQ) are cytoplasmic. A helical membrane pass occupies residues 77–97 (IMSGIVVLTVMWQAFGYSLTF). The Extracellular segment spans residues 98-127 (GPDQKGIIGNLDHAFLINVSYDDCSPNAPN). The chain crosses the membrane as a helical span at residues 128–148 (IPAAAYAFFMMMFANITPLLM). The Cytoplasmic segment spans residues 149-160 (TGAFAERVKFKA). Residues 161-181 (FIALTVAWEIIVFYPVAHWIW) traverse the membrane as a helical segment. The Extracellular segment spans residues 182 to 194 (GGGWLHKYFGVLD). A helical membrane pass occupies residues 195-215 (FAGGIVIHTSAGVSALVIALY). The Cytoplasmic portion of the chain corresponds to 216 to 233 (VGRRKDFEKYGGEFPPSN). A helical membrane pass occupies residues 234-254 (LPLATIGAALLWMGWFGFNAG). The Extracellular portion of the chain corresponds to 255 to 265 (SALAAGNIATS). The helical transmembrane segment at 266–286 (AVASTQIGGSFSAIVWIILSA) threads the bilayer. Over 287-293 (AKGKPNT) the chain is Cytoplasmic. The chain crosses the membrane as a helical span at residues 294-314 (VSVINGVIAGLAGITPASGYI). Over 315-316 (NS) the chain is Extracellular. The chain crosses the membrane as a helical span at residues 317–337 (QYSIGLGICLGLASYYSVVLL). At 338–351 (KHKLHIDDALDVSS) the chain is on the cytoplasmic side. The chain crosses the membrane as a helical span at residues 352 to 372 (VHGLTGIIGSLAIGFCAELSV). Topologically, residues 373-392 (NPNGANGAFYGNPKLIGTQL) are extracellular. The chain crosses the membrane as a helical span at residues 393–413 (LGVVSVAVWAAAWTWVLLKII). At 414 to 463 (DATIGVKIDESEEELGLDLVEHGEFAYHNISLQGNENHYSSVINSHDFFK) the chain is on the cytoplasmic side.

This sequence belongs to the ammonia transporter channel (TC 1.A.11.2) family.

It is found in the cell membrane. The protein resides in the endosome membrane. It localises to the lysosome membrane. Its subcellular location is the cytoplasmic vesicle. The protein localises to the phagosome membrane. Its function is as follows. Ammonium transporter that mediates the excretion of ammonium. Controls ammonium homeostasis during growth and development. Ammonium has been shown to function as a morphogen at multiple steps during the development. This is Ammonium transporter 1 (amtA) from Dictyostelium discoideum (Social amoeba).